A 723-amino-acid polypeptide reads, in one-letter code: Heme/hemopexin utilization protein C (723 aa).

The signal sequence occupies residues 1–21; sequence MRFSKLSLAITTTLVTANALA. One can recognise a TBDR plug domain in the interval 36 to 147; sequence DPSRFAYTPE…LGGVVAMRTP (112 aa). The 566-residue stretch at 158-723 folds into the TBDR beta-barrel domain; that stretch reads KFGVKIRQGY…NAKISAVYSF (566 aa). The TonB C-terminal box motif lies at 706–723; it reads SLMEGTGRNAKISAVYSF.

Belongs to the TonB-dependent receptor family.

The protein resides in the cell outer membrane. Its function is as follows. Required for utilization of free heme at low concentrations. In Haemophilus influenzae (strain ATCC 51907 / DSM 11121 / KW20 / Rd), this protein is Heme/hemopexin utilization protein C (hxuC).